The chain runs to 564 residues: Phosphomethylpyrimidine synthase (564 aa).

Residues Asn203, Met232, Tyr261, His297, 317-319 (SRG), 358-361 (DGLR), and Glu397 contribute to the substrate site. His401 is a binding site for Zn(2+). Position 424 (Tyr424) interacts with substrate. Residue His465 coordinates Zn(2+). Cys541, Cys544, and Cys549 together coordinate [4Fe-4S] cluster.

Belongs to the ThiC family. [4Fe-4S] cluster is required as a cofactor.

The catalysed reaction is 5-amino-1-(5-phospho-beta-D-ribosyl)imidazole + S-adenosyl-L-methionine = 4-amino-2-methyl-5-(phosphooxymethyl)pyrimidine + CO + 5'-deoxyadenosine + formate + L-methionine + 3 H(+). It participates in cofactor biosynthesis; thiamine diphosphate biosynthesis. Catalyzes the synthesis of the hydroxymethylpyrimidine phosphate (HMP-P) moiety of thiamine from aminoimidazole ribotide (AIR) in a radical S-adenosyl-L-methionine (SAM)-dependent reaction. The sequence is that of Phosphomethylpyrimidine synthase from Bacteroides fragilis (strain ATCC 25285 / DSM 2151 / CCUG 4856 / JCM 11019 / LMG 10263 / NCTC 9343 / Onslow / VPI 2553 / EN-2).